The chain runs to 65 residues: DNA gyrase inhibitor YacG (65 aa).

Cys9, Cys12, Cys28, and Cys32 together coordinate Zn(2+). Positions 43–65 (EEKRIPSQSENSDSDDWSGQPEQ) are disordered.

This sequence belongs to the DNA gyrase inhibitor YacG family. Interacts with GyrB. Zn(2+) is required as a cofactor.

Functionally, inhibits all the catalytic activities of DNA gyrase by preventing its interaction with DNA. Acts by binding directly to the C-terminal domain of GyrB, which probably disrupts DNA binding by the gyrase. This chain is DNA gyrase inhibitor YacG, found in Photorhabdus laumondii subsp. laumondii (strain DSM 15139 / CIP 105565 / TT01) (Photorhabdus luminescens subsp. laumondii).